The following is a 163-amino-acid chain: Keratin-associated protein 11-1 (163 aa).

4 tandem repeats follow at residues C111–V120, C121–V130, C131–V140, and C141–T150. Residues C111–T150 are 4 X 10 AA approximate repeats.

Belongs to the PMG family. In terms of tissue distribution, expressed in the upper matrix and in the entire hair cortex.

In terms of biological role, in the hair cortex, hair keratin intermediate filaments are embedded in an interfilamentous matrix, consisting of hair keratin-associated proteins (KRTAP), which are essential for the formation of a rigid and resistant hair shaft through their extensive disulfide bond cross-linking with abundant cysteine residues of hair keratins. The matrix proteins include the high-sulfur and high-glycine-tyrosine keratins. The sequence is that of Keratin-associated protein 11-1 (KRTAP11-1) from Homo sapiens (Human).